The following is a 215-amino-acid chain: 3-demethoxyubiquinol 3-hydroxylase (215 aa).

Fe cation is bound by residues Glu-64, Glu-94, His-97, Glu-146, Glu-178, and His-181.

Belongs to the COQ7 family. Fe cation serves as cofactor.

The protein resides in the cell membrane. It catalyses the reaction a 5-methoxy-2-methyl-3-(all-trans-polyprenyl)benzene-1,4-diol + AH2 + O2 = a 3-demethylubiquinol + A + H2O. It participates in cofactor biosynthesis; ubiquinone biosynthesis. Its function is as follows. Catalyzes the hydroxylation of 2-nonaprenyl-3-methyl-6-methoxy-1,4-benzoquinol during ubiquinone biosynthesis. This is 3-demethoxyubiquinol 3-hydroxylase from Pseudomonas paraeruginosa (strain DSM 24068 / PA7) (Pseudomonas aeruginosa (strain PA7)).